Here is a 321-residue protein sequence, read N- to C-terminus: Ribose-phosphate pyrophosphokinase (321 aa).

ATP-binding positions include 44 to 46 (DGE) and 103 to 104 (RQ). Mg(2+) is bound by residues His-137 and Asp-179. Lys-202 is an active-site residue. Residues Arg-204, Asp-228, and 232–236 (DTAGT) contribute to the D-ribose 5-phosphate site.

Belongs to the ribose-phosphate pyrophosphokinase family. Class I subfamily. As to quaternary structure, homohexamer. The cofactor is Mg(2+).

The protein localises to the cytoplasm. It carries out the reaction D-ribose 5-phosphate + ATP = 5-phospho-alpha-D-ribose 1-diphosphate + AMP + H(+). It functions in the pathway metabolic intermediate biosynthesis; 5-phospho-alpha-D-ribose 1-diphosphate biosynthesis; 5-phospho-alpha-D-ribose 1-diphosphate from D-ribose 5-phosphate (route I): step 1/1. In terms of biological role, involved in the biosynthesis of the central metabolite phospho-alpha-D-ribosyl-1-pyrophosphate (PRPP) via the transfer of pyrophosphoryl group from ATP to 1-hydroxyl of ribose-5-phosphate (Rib-5-P). The polypeptide is Ribose-phosphate pyrophosphokinase (Staphylococcus haemolyticus (strain JCSC1435)).